Reading from the N-terminus, the 191-residue chain is Decorin-binding protein A (191 aa).

The signal sequence occupies residues 1–29 (MIKCNNKTFNNLLKLTILVNLLISCGLTG).

It belongs to the decorin-binding protein family.

Binds to decorin which may mediate the adherence of B.burgdorferi to collagen fibers in skin and other tissues. The protein is Decorin-binding protein A (dbpA) of Borreliella burgdorferi (strain ATCC 35210 / DSM 4680 / CIP 102532 / B31) (Borrelia burgdorferi).